A 388-amino-acid chain; its full sequence is Phosphoglycerate kinase (388 aa).

Residues 21-23 (DLN), R36, 59-62 (HLGR), R114, and R147 contribute to the substrate site. ATP is bound by residues K198, E315, and 341–344 (GGDT).

This sequence belongs to the phosphoglycerate kinase family. As to quaternary structure, monomer.

The protein resides in the cytoplasm. The enzyme catalyses (2R)-3-phosphoglycerate + ATP = (2R)-3-phospho-glyceroyl phosphate + ADP. It functions in the pathway carbohydrate degradation; glycolysis; pyruvate from D-glyceraldehyde 3-phosphate: step 2/5. The sequence is that of Phosphoglycerate kinase from Hahella chejuensis (strain KCTC 2396).